An 80-amino-acid polypeptide reads, in one-letter code: U-Asilidin(1)-Dg12 (80 aa).

The N-terminal stretch at 1-24 is a signal peptide; the sequence is MARLLVVSVGVFLAVIMLSSETMS. Positions 25–46 are excised as a propeptide; that stretch reads LPAGENLPALTLFEAQNQLIGL. 3 disulfide bridges follow: C53–C67, C60–C71, and C66–C78.

It belongs to the asilidin-1 family. As to expression, expressed by the venom gland.

The protein localises to the secreted. Neurotoxin that may modulate ions channels (other than those tested). In vivo, induces neurotoxic effects when injected into insects (tested on L.cuprina and A.domesticus). This Dolopus genitalis (Giant Australian assassin fly) protein is U-Asilidin(1)-Dg12.